Consider the following 452-residue polypeptide: NAD kinase 2, mitochondrial (452 aa).

A mitochondrion-targeting transit peptide spans 1–50; sequence MTCYRGFLLGSCRRVAGGRAALRGSGSGADGRRHLGHGQPRELAGGGSPA. A disordered region spans residues 23–52; sequence RGSGSGADGRRHLGHGQPRELAGGGSPADG. Lysine 64 carries the post-translational modification N6-acetyllysine; alternate. Lysine 64 is modified (N6-succinyllysine; alternate). Serine 176 bears the Phosphoserine mark. Position 312 is an N6-succinyllysine (lysine 312). An N6-acetyllysine; alternate modification is found at lysine 327. Lysine 327 bears the N6-succinyllysine; alternate mark. Position 377 is a phosphoserine (serine 377). Lysine 407 is subject to N6-acetyllysine.

This sequence belongs to the NAD kinase family. Homodimer.

The protein resides in the mitochondrion. The enzyme catalyses NAD(+) + ATP = ADP + NADP(+) + H(+). Inhibited by NADH, NADPH and NADP(+). In terms of biological role, mitochondrial NAD(+) kinase that phosphorylates NAD(+) to yield NADP(+). Can use both ATP or inorganic polyphosphate as the phosphoryl donor. The protein is NAD kinase 2, mitochondrial (Nadk2) of Mus musculus (Mouse).